The sequence spans 439 residues: Cln5-like protein 3 (439 aa).

Residues 1–24 form the signal peptide; sequence MKNMLNIILTLTIIFIGLIKISIS. Asparagine 93, asparagine 112, asparagine 122, asparagine 138, asparagine 168, asparagine 219, asparagine 268, asparagine 289, asparagine 304, and asparagine 359 each carry an N-linked (GlcNAc...) asparagine glycan. The helical transmembrane segment at 371–391 threads the bilayer; that stretch reads IIFISIAIGFGVVIILYISIG.

It belongs to the CLN5 family.

It localises to the membrane. This is Cln5-like protein 3 (cln5lc) from Dictyostelium discoideum (Social amoeba).